Consider the following 410-residue polypeptide: FBD-associated F-box protein At5g38590 (410 aa).

Positions 1 to 47 (MDKINGLPDDLLVKILSYVPTDIAVSTSILSKRWEFLWMWLPNLDYT) constitute an F-box domain. An FBD domain is found at 335–385 (GWNQPSSVPECLLSSLQIFKWPQYLGRPEDRDIAVYILKNARHLKKTTILA).

The chain is FBD-associated F-box protein At5g38590 from Arabidopsis thaliana (Mouse-ear cress).